The sequence spans 148 residues: Nucleoside diphosphate kinase (148 aa).

Residues Lys-9, Phe-57, Arg-85, Thr-91, Arg-102, and Asn-112 each coordinate ATP. The residue at position 91 (Thr-91) is a Phosphothreonine. His-115 acts as the Pros-phosphohistidine intermediate in catalysis. Ser-122 bears the Phosphoserine mark.

It belongs to the NDK family. In terms of assembly, homotetramer. Mg(2+) is required as a cofactor.

It localises to the cytoplasm. It carries out the reaction a 2'-deoxyribonucleoside 5'-diphosphate + ATP = a 2'-deoxyribonucleoside 5'-triphosphate + ADP. The enzyme catalyses a ribonucleoside 5'-diphosphate + ATP = a ribonucleoside 5'-triphosphate + ADP. Its function is as follows. Major role in the synthesis of nucleoside triphosphates other than ATP. The ATP gamma phosphate is transferred to the NDP beta phosphate via a ping-pong mechanism, using a phosphorylated active-site intermediate. The polypeptide is Nucleoside diphosphate kinase (Bacillus cereus (strain ATCC 14579 / DSM 31 / CCUG 7414 / JCM 2152 / NBRC 15305 / NCIMB 9373 / NCTC 2599 / NRRL B-3711)).